The sequence spans 1399 residues: DNA-directed RNA polymerase subunit beta' (1399 aa).

Cys70, Cys72, Cys85, and Cys88 together coordinate Zn(2+). 3 residues coordinate Mg(2+): Asp460, Asp462, and Asp464. The Zn(2+) site is built by Cys814, Cys888, Cys895, and Cys898.

It belongs to the RNA polymerase beta' chain family. As to quaternary structure, the RNAP catalytic core consists of 2 alpha, 1 beta, 1 beta' and 1 omega subunit. When a sigma factor is associated with the core the holoenzyme is formed, which can initiate transcription. Mg(2+) is required as a cofactor. Requires Zn(2+) as cofactor.

It catalyses the reaction RNA(n) + a ribonucleoside 5'-triphosphate = RNA(n+1) + diphosphate. DNA-dependent RNA polymerase catalyzes the transcription of DNA into RNA using the four ribonucleoside triphosphates as substrates. The polypeptide is DNA-directed RNA polymerase subunit beta' (Pseudomonas fluorescens (strain SBW25)).